Here is a 298-residue protein sequence, read N- to C-terminus: ATP synthase gamma chain (298 aa).

It belongs to the ATPase gamma chain family. As to quaternary structure, F-type ATPases have 2 components, CF(1) - the catalytic core - and CF(0) - the membrane proton channel. CF(1) has five subunits: alpha(3), beta(3), gamma(1), delta(1), epsilon(1). CF(0) has three main subunits: a, b and c.

The protein resides in the cell membrane. In terms of biological role, produces ATP from ADP in the presence of a proton gradient across the membrane. The gamma chain is believed to be important in regulating ATPase activity and the flow of protons through the CF(0) complex. The polypeptide is ATP synthase gamma chain (Frankia casuarinae (strain DSM 45818 / CECT 9043 / HFP020203 / CcI3)).